The chain runs to 93 residues: RNA-binding protein Hfq (93 aa).

The 60-residue stretch at 9 to 68 (DPFLNALRKERIPVSIFLVNGIKLQGQIESFDQYVVLLKNAVSQMVYKHAISTVVPARNP) folds into the Sm domain. Residues 74–86 (PAMAAGATAAPAA) are compositionally biased toward low complexity. Residues 74–93 (PAMAAGATAAPAADEGYGNQ) are disordered.

Belongs to the Hfq family. Homohexamer.

Its function is as follows. RNA chaperone that binds small regulatory RNA (sRNAs) and mRNAs to facilitate mRNA translational regulation in response to envelope stress, environmental stress and changes in metabolite concentrations. Also binds with high specificity to tRNAs. This Alcanivorax borkumensis (strain ATCC 700651 / DSM 11573 / NCIMB 13689 / SK2) protein is RNA-binding protein Hfq.